Consider the following 404-residue polypeptide: Argininosuccinate synthase (404 aa).

ATP is bound by residues 10 to 18 (AYSGGVDTS) and Ala38. Tyr89 serves as a coordination point for L-citrulline. Gly119 contributes to the ATP binding site. L-aspartate-binding residues include Thr121, Asn125, and Asp126. Asn125 serves as a coordination point for L-citrulline. The L-citrulline site is built by Arg129, Ser177, Ser186, Glu262, and Tyr274.

This sequence belongs to the argininosuccinate synthase family. Type 1 subfamily. As to quaternary structure, homotetramer.

The protein resides in the cytoplasm. The enzyme catalyses L-citrulline + L-aspartate + ATP = 2-(N(omega)-L-arginino)succinate + AMP + diphosphate + H(+). Its pathway is amino-acid biosynthesis; L-arginine biosynthesis; L-arginine from L-ornithine and carbamoyl phosphate: step 2/3. This is Argininosuccinate synthase from Prochlorococcus marinus (strain MIT 9515).